Consider the following 214-residue polypeptide: NADH-quinone oxidoreductase subunit C (214 aa).

The protein belongs to the complex I 30 kDa subunit family. NDH-1 is composed of 14 different subunits. Subunits NuoB, C, D, E, F, and G constitute the peripheral sector of the complex.

The protein localises to the cell inner membrane. It catalyses the reaction a quinone + NADH + 5 H(+)(in) = a quinol + NAD(+) + 4 H(+)(out). Its function is as follows. NDH-1 shuttles electrons from NADH, via FMN and iron-sulfur (Fe-S) centers, to quinones in the respiratory chain. The immediate electron acceptor for the enzyme in this species is believed to be ubiquinone. Couples the redox reaction to proton translocation (for every two electrons transferred, four hydrogen ions are translocated across the cytoplasmic membrane), and thus conserves the redox energy in a proton gradient. The sequence is that of NADH-quinone oxidoreductase subunit C from Caulobacter sp. (strain K31).